The chain runs to 473 residues: Eukaryotic translation initiation factor 2 subunit gamma (473 aa).

In terms of domain architecture, tr-type G spans 40–250 (QATINIGTIG…AICNIAPPNY (211 aa)). Residues 49–56 (GHVAHGKS) form a G1 region. Residue 52-57 (AHGKSS) coordinates GTP. The interval 77–81 (NITIK) is G2. The segment at 135 to 138 (DCPG) is G3. GTP contacts are provided by residues 193–196 (NKMD) and 228–230 (SAQ). The interval 193-196 (NKMD) is G4. Residues 228–230 (SAQ) are G5. The tract at residues 458–470 (GKVRSGGTLCEVV) is interacts with CDC123.

Belongs to the TRAFAC class translation factor GTPase superfamily. Classic translation factor GTPase family. EIF2G subfamily. Eukaryotic translation initiation factor 2 eIF2 is a heterotrimeric complex composed of an alpha, a beta and a gamma subunit. The factors eIF-1, eIF-2, eIF-3, TIF5/eIF-5 and methionyl-tRNAi form a multifactor complex (MFC) that may bind to the 40S ribosome.

The protein localises to the cytoplasm. It is found in the cytosol. It carries out the reaction GTP + H2O = GDP + phosphate + H(+). As a subunit of eukaryotic initiation factor 2 eIF2, involved in the early steps of protein synthesis. In the presence of GTP, eIF-2 forms a ternary complex with initiator tRNA Met-tRNAi and then recruits the 40S ribosomal complex and initiation factors eIF-1, eIF-1A and eIF-3 to form the 43S pre-initiation complex (43S PIC), a step that determines the rate of protein translation. The 43S PIC binds to mRNA and scans downstream to the initiation codon, where it forms a 48S initiation complex by codon-anticodon base pairing. This leads to the displacement of eIF-1 to allow GTPase-activating protein (GAP) eIF-5-mediated hydrolysis of eIF2-bound GTP. Hydrolysis of GTP and release of Pi, which makes GTP hydrolysis irreversible, causes the release of the eIF-2-GDP binary complex from the 40S subunit, an event that is essential for the subsequent joining of the 60S ribosomal subunit to form an elongation-competent 80S ribosome. In order for eIF-2 to recycle and catalyze another round of initiation, the GDP bound to eIF-2 must be exchanged with GTP by way of a reaction catalyzed by GDP-GTP exchange factor (GEF) eIF-2B. In Cryptococcus neoformans var. grubii serotype A (strain H99 / ATCC 208821 / CBS 10515 / FGSC 9487) (Filobasidiella neoformans var. grubii), this protein is Eukaryotic translation initiation factor 2 subunit gamma.